Consider the following 47-residue polypeptide: Putative protein PinH (47 aa).

The 47-residue stretch at 1–47 folds into the Resolvase/invertase-type recombinase catalytic domain; it reads MWHLVVLLEELCERGINFRALAQSIFAQQWGDECCKSKTICDLKVIV.

The protein belongs to the site-specific recombinase resolvase family.

The polypeptide is Putative protein PinH (pinH) (Escherichia coli (strain K12)).